We begin with the raw amino-acid sequence, 89 residues long: Acylphosphatase (89 aa).

One can recognise an Acylphosphatase-like domain in the interval 4–89; sequence CVRCLIAGRV…IPEIQMFEVR (86 aa). Catalysis depends on residues R19 and N37.

It belongs to the acylphosphatase family.

The enzyme catalyses an acyl phosphate + H2O = a carboxylate + phosphate + H(+). This chain is Acylphosphatase (acyP), found in Nitrosococcus oceani (strain ATCC 19707 / BCRC 17464 / JCM 30415 / NCIMB 11848 / C-107).